The chain runs to 121 residues: MRKSYKQFYKAPRRHIQVWEAANGPIPKGYYIDHIDGNPLNDALDNLRLALPKENSWNMKTPKSNTSGLKGLSWSKEREMWRGTVTAEGKQHNFRSRDLLEVVAWIYRTRRELHGQFARFR.

The chain is Protein 3.8 from Escherichia phage T7 (Bacteriophage T7).